A 116-amino-acid polypeptide reads, in one-letter code: Ribonuclease P protein component (116 aa).

Belongs to the RnpA family. As to quaternary structure, consists of a catalytic RNA component (M1 or rnpB) and a protein subunit.

The enzyme catalyses Endonucleolytic cleavage of RNA, removing 5'-extranucleotides from tRNA precursor.. Its function is as follows. RNaseP catalyzes the removal of the 5'-leader sequence from pre-tRNA to produce the mature 5'-terminus. It can also cleave other RNA substrates such as 4.5S RNA. The protein component plays an auxiliary but essential role in vivo by binding to the 5'-leader sequence and broadening the substrate specificity of the ribozyme. The sequence is that of Ribonuclease P protein component from Exiguobacterium sibiricum (strain DSM 17290 / CCUG 55495 / CIP 109462 / JCM 13490 / 255-15).